The following is a 790-amino-acid chain: Phenylalanine--tRNA ligase beta subunit (790 aa).

The region spanning 40–149 (AEKVSGVVVG…IDAPVGTDIN (110 aa)) is the tRNA-binding domain. The B5 domain occupies 402–479 (NKQIKINLSI…RIYGYSKLPE (78 aa)). Positions 457, 463, 466, and 467 each coordinate Mg(2+). In terms of domain architecture, FDX-ACB spans 698–789 (SKYPSVSRDI…LKTKFNIEQR (92 aa)).

It belongs to the phenylalanyl-tRNA synthetase beta subunit family. Type 1 subfamily. As to quaternary structure, tetramer of two alpha and two beta subunits. Requires Mg(2+) as cofactor.

It localises to the cytoplasm. It carries out the reaction tRNA(Phe) + L-phenylalanine + ATP = L-phenylalanyl-tRNA(Phe) + AMP + diphosphate + H(+). The chain is Phenylalanine--tRNA ligase beta subunit from Francisella tularensis subsp. tularensis (strain SCHU S4 / Schu 4).